The primary structure comprises 221 residues: Adenylate kinase (221 aa).

Residue 10-15 (GAGKGT) participates in ATP binding. Residues 30 to 59 (STGDMLRAAVKAGTPLGIEAKKVMDAGGLV) are NMP. Residues Thr31, Arg36, 57–59 (GLV), 85–88 (GFPR), and Gln92 contribute to the AMP site. Positions 122–159 (GRRVHVASGRTYHVKFNPPKADMVDDETGEALIQRDDD) are LID. ATP-binding positions include Arg123 and 132–133 (TY). 2 residues coordinate AMP: Arg156 and Arg167. Gly207 provides a ligand contact to ATP.

This sequence belongs to the adenylate kinase family. Monomer.

It localises to the cytoplasm. It carries out the reaction AMP + ATP = 2 ADP. Its pathway is purine metabolism; AMP biosynthesis via salvage pathway; AMP from ADP: step 1/1. In terms of biological role, catalyzes the reversible transfer of the terminal phosphate group between ATP and AMP. Plays an important role in cellular energy homeostasis and in adenine nucleotide metabolism. The polypeptide is Adenylate kinase (Cupriavidus metallidurans (strain ATCC 43123 / DSM 2839 / NBRC 102507 / CH34) (Ralstonia metallidurans)).